Reading from the N-terminus, the 331-residue chain is Putative type II secretion system C-type protein YghF (331 aa).

The chain crosses the membrane as a helical span at residues 44-60 (MFWLMLLIISAKMAHSL).

This sequence belongs to the GSP C family.

It localises to the cell inner membrane. In terms of biological role, involved in a type II secretion system (T2SS, formerly general secretion pathway, GSP) for the export of folded proteins across the outer membrane. This is Putative type II secretion system C-type protein YghF from Escherichia coli (strain K12).